A 714-amino-acid chain; its full sequence is ATP-dependent DNA helicase DinG (714 aa).

The region spanning 17–294 (ALQDQIPDFI…TSMEQFRPKT (278 aa)) is the Helicase ATP-binding domain. 54–61 (APTGVGKT) is an ATP binding site. Positions 120, 194, 199, and 205 each coordinate [4Fe-4S] cluster. A DEAH box motif is present at residues 248 to 251 (DEGH). Positions 517 to 698 (HIAEMAAYFR…VFPIEQPAVP (182 aa)) constitute a Helicase C-terminal domain.

It belongs to the helicase family. DinG subfamily. Type 1 sub-subfamily. Requires [4Fe-4S] cluster as cofactor.

The enzyme catalyses Couples ATP hydrolysis with the unwinding of duplex DNA at the replication fork by translocating in the 5'-3' direction. This creates two antiparallel DNA single strands (ssDNA). The leading ssDNA polymer is the template for DNA polymerase III holoenzyme which synthesizes a continuous strand.. It carries out the reaction ATP + H2O = ADP + phosphate + H(+). DNA-dependent ATPase and 5'-3' DNA helicase. Unwinds D-loops, R-loops, forked DNA and G-quadruplex DNA. The chain is ATP-dependent DNA helicase DinG from Salmonella choleraesuis (strain SC-B67).